The sequence spans 43 residues: Protein PsbN (43 aa).

A helical transmembrane segment spans residues 7-27 (LVVAIAAITICITAFAIYTAF).

Belongs to the PsbN family.

It localises to the cellular thylakoid membrane. May play a role in photosystem I and II biogenesis. The polypeptide is Protein PsbN (Synechococcus sp. (strain JA-3-3Ab) (Cyanobacteria bacterium Yellowstone A-Prime)).